The following is a 438-amino-acid chain: Putative ZDHHC-type palmitoyltransferase 7 (438 aa).

N-linked (GlcNAc...) asparagine glycans are attached at residues Asn-12 and Asn-13. Transmembrane regions (helical) follow at residues 48-68 and 77-97; these read IFCLVHFIVYCVIIFRKGTIL and YFYLIWTHCVFFFAIGTYFLI. Asn-119, Asn-144, and Asn-157 each carry an N-linked (GlcNAc...) asparagine glycan. The interval 183–239 is disordered; sequence EDSINDDTITTTTTTTTTTSTSTIPEISNDDDDNNNENNNDNVNNRNNNNSNGEKED. 2 stretches are compositionally biased toward low complexity: residues 190-206 and 218-234; these read TITTTTTTTTTTSTSTI and NENNNDNVNNRNNNNSN. The N-linked (GlcNAc...) asparagine glycan is linked to Asn-231. Residues 249–299 enclose the DHHC domain; the sequence is YFCKKCLVDIPLRTKHCVKCNRCVLKYDHHCVFIGGCVGLNNHKNFLLFLL. Helical transmembrane passes span 294–314 and 330–350; these read FLLFLLAESLLLLLGLRIIVT and IAIIPPTLLIFGGLCMPFALF. Asn-360 carries an N-linked (GlcNAc...) asparagine glycan.

The protein belongs to the DHHC palmitoyltransferase family.

Its subcellular location is the membrane. It carries out the reaction L-cysteinyl-[protein] + hexadecanoyl-CoA = S-hexadecanoyl-L-cysteinyl-[protein] + CoA. The chain is Putative ZDHHC-type palmitoyltransferase 7 from Dictyostelium discoideum (Social amoeba).